The chain runs to 332 residues: Fructose-1,6-bisphosphatase class 1 (332 aa).

Positions 89, 110, 112, and 113 each coordinate Mg(2+). Substrate contacts are provided by residues Asp113–Ser116, Asn206, Tyr239, Tyr257–Tyr259, and Lys269. Residue Glu275 participates in Mg(2+) binding.

Belongs to the FBPase class 1 family. In terms of assembly, homotetramer. Mg(2+) serves as cofactor.

The protein resides in the cytoplasm. It carries out the reaction beta-D-fructose 1,6-bisphosphate + H2O = beta-D-fructose 6-phosphate + phosphate. Its pathway is carbohydrate biosynthesis; gluconeogenesis. The sequence is that of Fructose-1,6-bisphosphatase class 1 from Salmonella typhimurium (strain LT2 / SGSC1412 / ATCC 700720).